Here is a 346-residue protein sequence, read N- to C-terminus: Eukaryotic translation initiation factor 3 subunit I (346 aa).

WD repeat units lie at residues 8–47 (GHER…RLGT), 50–89 (GHNG…IAHS), 150–189 (EGCA…CLEI), 192–233 (LHKQ…KTYE), and 289–328 (DHFG…FDFK).

The protein belongs to the eIF-3 subunit I family. As to quaternary structure, component of the eukaryotic translation initiation factor 3 (eIF-3) complex.

The protein localises to the cytoplasm. Component of the eukaryotic translation initiation factor 3 (eIF-3) complex, which is involved in protein synthesis of a specialized repertoire of mRNAs and, together with other initiation factors, stimulates binding of mRNA and methionyl-tRNAi to the 40S ribosome. The eIF-3 complex specifically targets and initiates translation of a subset of mRNAs involved in cell proliferation. The chain is Eukaryotic translation initiation factor 3 subunit I from Eremothecium gossypii (strain ATCC 10895 / CBS 109.51 / FGSC 9923 / NRRL Y-1056) (Yeast).